Here is a 485-residue protein sequence, read N- to C-terminus: Alpha-amylase (485 aa).

An N-terminal signal peptide occupies residues 1-18 (MFLTSVLILCSLAALSLG). The residue at position 19 (Gln19) is a Pyrrolidone carboxylic acid. Cys46 and Cys102 are joined by a disulfide. 3 residues coordinate Ca(2+): Asn116, Arg164, and Asp173. An intrachain disulfide couples Cys152 to Cys166. Arg201 lines the chloride pocket. Asp203 serves as the catalytic Nucleophile. His207 serves as a coordination point for Ca(2+). Glu240 (proton donor) is an active-site residue. Chloride is bound by residues Asn303 and Arg339. A disulfide bridge links Cys439 with Cys451. A glycan (N-linked (GlcNAc...) asparagine) is linked at Asn448.

This sequence belongs to the glycosyl hydrolase 13 family. In terms of assembly, monomer. The cofactor is Ca(2+). Chloride is required as a cofactor. As to expression, expressed in larval and adult gut.

It localises to the secreted. It carries out the reaction Endohydrolysis of (1-&gt;4)-alpha-D-glucosidic linkages in polysaccharides containing three or more (1-&gt;4)-alpha-linked D-glucose units.. The chain is Alpha-amylase from Phaedon cochleariae (Mustard beetle).